Reading from the N-terminus, the 1346-residue chain is MDQYSLGDEGALPSEMHLPSFSESQGLNCSDTLNRDLGPNTRGFLYAGLSGLDPDPSLPTPDMSSEVLEDNLDTLSLYSGKDSDSVKLLEEYADSESQASLQDLGLGVLKAKEADEGGRATSGSARKGKRQHSSPQNPLLDCSLCGKVFSSASSLSKHYLTHSQERKHVCKICSKAFKRQDHLTGHMLTHQKTKPFVCIEQGCSKSYCDYRSLRRHYEVHHGLCILKEAPPEEEACGDSPHAHESAGQPPPSSLRSLVPPEARSPGSLLPHRDLLRRIVSSIVHQKTPSPGPAPAGASDSEGRNTACPCPASSGSSSCTPAGPHAAPAALDTELPEEPCLPQKEPATDVFTAPNSRAAENGAPDPPEPEPDTALLQARSTAECWPEGGSVPACLPLFRGQTVPASSQPSSHSFQWLRNLPGCPKSKGNNVFVVHKPSAVPSREGSESGPGPSSGSPSEESPPGPGGGLEDALPFPAALLRVPAEAPSDPRSASGEDDPCAPKKVKVDCDSFLCQNPGEPGLQEAQKAGGLPADASPLFRQLFLKSQEPLVSHEQMQVFQMITKSQRIFSHAQVAAVSSQLPAPEGKPAALRPLQGPWPQQPPPLAPAVDSLHAGPGNPEAEGSPARRRKTTPGVPREASPGSTRRDAKGGLKVAAVPTPLAAPSLDPSRNPDISSLAKQLRSSKGTLDLEDIFPSTGQRQTQLGGEEPPGASLPGKQAPAENGAASRITKGEKGPACSRGGGYRLLGNPRAPRFSGFRKEKAKMDMCCAASPSQVAMASFSSAGPPADPSKSKLTIFSRIQGGNIYRLPHPVKEENVAGRGNQQNGSPTDWTKPRSTFVCKNCSQMFYTEKGLSSHMCFHSDQWPSPRGKQEPQVFGTEFCKPLRQVLRPEGDRHSPPGTKKPLDPTAAAPLVVPQSIPVVPVTRHIGSMAMGQEKDGEERDSKESSQQRKRKKRPPPSTAGEPGPAGCHQSRLRSPMFLVDCLLKGLFQCSPYTPPPMLSPIREGSGVYFNTLCSTSTQASPDQLISSMLDQVDGSFGICVVKDDTKISIEPHINIGSRFQAEIPELQERSLAGTDEHVASLVWKPWGDMMISSETQDRVTELCNVACSSVMPGGGTNLELALHCLHEAQGNVQVALETLLLRGPHKPRTHLLADYRYTGSDVWTPIEKRLFKKAFYAHKKDFYLIHKMIQTKTVAQCVEYYYIWKKMIKFDCGRAPGLEKRVKREPEEVERTEEKVPCSPRERPSHHPTPKLKTKSYRRESILSSSPNAGSKRTPELLGSAESQGIFPCRECERVFDKIKSRNAHMKRHRLQDHVEPIIRVKWPVKPFQLKEEELGADIGPLQW.

Disordered stretches follow at residues 1–34 and 113–136; these read MDQY…DTLN and EADE…SSPQ. Residues 21–32 are compositionally biased toward polar residues; sequence FSESQGLNCSDT. 3 C2H2-type zinc fingers span residues 140–162, 168–190, and 196–220; these read LDCS…YLTH, HVCK…MLTH, and FVCI…YEVH. Disordered stretches follow at residues 235-271, 283-328, 437-472, and 578-744; these read ACGD…LLPH, VHQK…AAPA, SAVP…EDAL, and SQLP…GGYR. 2 stretches are compositionally biased toward low complexity: residues 294-323 and 440-458; these read PAGA…PAGP and PSRE…SPSE. Residues 671–685 show a composition bias toward polar residues; the sequence is PDISSLAKQLRSSKG. The C2H2-type 4 zinc-finger motif lies at 838-860; that stretch reads FVCKNCSQMFYTEKGLSSHMCFH. The tract at residues 931 to 971 is disordered; that stretch reads AMGQEKDGEERDSKESSQQRKRKKRPPPSTAGEPGPAGCHQ. Positions 934-948 are enriched in basic and acidic residues; it reads QEKDGEERDSKESSQ. One can recognise an ELM2 domain in the interval 1053–1145; the sequence is PHINIGSRFQ…VALETLLLRG (93 aa). In terms of domain architecture, SANT spans 1160–1211; that stretch reads TGSDVWTPIEKRLFKKAFYAHKKDFYLIHKMIQTKTVAQCVEYYYIWKKMIK. Residues 1224 to 1281 form a disordered region; that stretch reads VKREPEEVERTEEKVPCSPRERPSHHPTPKLKTKSYRRESILSSSPNAGSKRTPELLG. The segment covering 1234-1247 has biased composition (basic and acidic residues); sequence TEEKVPCSPRERPS. Residues 1248 to 1258 are compositionally biased toward basic residues; sequence HHPTPKLKTKS. The span at 1264-1273 shows a compositional bias: polar residues; that stretch reads ILSSSPNAGS. The C2H2-type 5 zinc finger occupies 1289 to 1311; that stretch reads FPCRECERVFDKIKSRNAHMKRH.

Interacts with DNTTIP1. Identified in a complex with KCDT19, HDAC1 and HSPA2. Component of a histone deacetylase complex containing DNTTIP1, ZNF541, HDAC1 and HDAC2. Identified in a complex with HDAC1, HDAC2, DNTTIP1 and KCTD19.

It is found in the nucleus. Transcription regulator which is essential for male fertility and for the completion of meiotic prophase in spermatocytes. Regulates progression of the pachytene stage of meiotic prophase by activating the expression of genes involved in meiosis during spermatogenesis. Maintains the repression of pre-pachytene transcriptional programs, including meiotic double-strand breaks (DSB) formation genes in pachytene spermatocytes and suppresses aberrant DSB formation after mid-pachytene, thus ensuring meiosis progression. The protein is Zinc finger protein 541 (ZNF541) of Homo sapiens (Human).